Reading from the N-terminus, the 959-residue chain is Protein SEY1 homolog 1 (959 aa).

At 1–767 (MQESDVFHNQ…ELAAITVHSK (767 aa)) the chain is on the cytoplasmic side. Residues 9 to 86 (NQLRVEMLKK…EEEKKEKENY (78 aa)) adopt a coiled-coil conformation. Residues 62–81 (EEKENMKVEEEEIKEEEEKK) form a disordered region. One can recognise a GB1/RHD3-type G domain in the interval 123-340 (GFNYNMLSIL…NQNTYFRPIY (218 aa)). A GTP-binding site is contributed by 133-140 (GPQNSGKS). Residues 768–788 (TPMWLILLIAFLSFDNIVYVF) traverse the membrane as a helical segment. Residues 789-791 (KSP) lie on the Lumenal side of the membrane. A helical membrane pass occupies residues 792–812 (TLLALTLIIIGIIYSLNKIGY). Over 813 to 959 (AYLIDSVISY…LNKIKEANEF (147 aa)) the chain is Cytoplasmic. Residues 849–868 (EAPKRKRPQKKTQDDKPKSS) form a disordered region.

Belongs to the TRAFAC class dynamin-like GTPase superfamily. GB1/RHD3 GTPase family. RHD3 subfamily.

The protein localises to the endoplasmic reticulum membrane. Functionally, probable GTP-binding protein that may be involved in cell development. This is Protein SEY1 homolog 1 from Entamoeba histolytica (strain ATCC 30459 / HM-1:IMSS / ABRM).